The primary structure comprises 105 residues: Large ribosomal subunit protein uL24 (105 aa).

It belongs to the universal ribosomal protein uL24 family. In terms of assembly, part of the 50S ribosomal subunit.

Its function is as follows. One of two assembly initiator proteins, it binds directly to the 5'-end of the 23S rRNA, where it nucleates assembly of the 50S subunit. In terms of biological role, one of the proteins that surrounds the polypeptide exit tunnel on the outside of the subunit. The chain is Large ribosomal subunit protein uL24 from Acinetobacter baumannii (strain AB307-0294).